Here is a 429-residue protein sequence, read N- to C-terminus: Histidine--tRNA ligase (429 aa).

This sequence belongs to the class-II aminoacyl-tRNA synthetase family. Homodimer.

Its subcellular location is the cytoplasm. It catalyses the reaction tRNA(His) + L-histidine + ATP = L-histidyl-tRNA(His) + AMP + diphosphate + H(+). The protein is Histidine--tRNA ligase of Pseudomonas paraeruginosa (strain DSM 24068 / PA7) (Pseudomonas aeruginosa (strain PA7)).